The following is a 156-amino-acid chain: Endoribonuclease YbeY (156 aa).

The Zn(2+) site is built by His122, His126, and His132.

The protein belongs to the endoribonuclease YbeY family. Requires Zn(2+) as cofactor.

It localises to the cytoplasm. Functionally, single strand-specific metallo-endoribonuclease involved in late-stage 70S ribosome quality control and in maturation of the 3' terminus of the 16S rRNA. The protein is Endoribonuclease YbeY of Moorella thermoacetica (strain ATCC 39073 / JCM 9320).